A 436-amino-acid chain; its full sequence is tRNA modification GTPase MnmE (436 aa).

(6S)-5-formyl-5,6,7,8-tetrahydrofolate is bound by residues R20, E77, and K117. In terms of domain architecture, TrmE-type G spans 214-360 (GLKIVIAGAP…FIKELESFCL (147 aa)). GTP is bound by residues 224–229 (NSGKSS), 243–249 (MEEAGTT), and 268–271 (DTAG). Mg(2+) contacts are provided by S228 and T249. K436 lines the (6S)-5-formyl-5,6,7,8-tetrahydrofolate pocket.

This sequence belongs to the TRAFAC class TrmE-Era-EngA-EngB-Septin-like GTPase superfamily. TrmE GTPase family. Homodimer. Heterotetramer of two MnmE and two MnmG subunits. The cofactor is K(+).

It is found in the cytoplasm. Its function is as follows. Exhibits a very high intrinsic GTPase hydrolysis rate. Involved in the addition of a carboxymethylaminomethyl (cmnm) group at the wobble position (U34) of certain tRNAs, forming tRNA-cmnm(5)s(2)U34. The sequence is that of tRNA modification GTPase MnmE from Bartonella quintana (strain Toulouse) (Rochalimaea quintana).